A 115-amino-acid polypeptide reads, in one-letter code: U17-barytoxin-Tl1c (115 aa).

Positions M1–A20 are cleaved as a signal peptide. Positions K21–R74 are excised as a propeptide. 3 disulfides stabilise this stretch: C75–C89, C82–C94, and C88–C109.

It belongs to the neurotoxin 14 (magi-1) family. 03 (ICK-30-40) subfamily. Expressed by the venom gland.

It is found in the secreted. Functionally, ion channel inhibitor. This Trittame loki (Brush-footed trapdoor spider) protein is U17-barytoxin-Tl1c.